Here is a 72-residue protein sequence, read N- to C-terminus: Translation initiation factor IF-1 (72 aa).

The region spanning Met1 to Arg72 is the S1-like domain.

The protein belongs to the IF-1 family. In terms of assembly, component of the 30S ribosomal translation pre-initiation complex which assembles on the 30S ribosome in the order IF-2 and IF-3, IF-1 and N-formylmethionyl-tRNA(fMet); mRNA recruitment can occur at any time during PIC assembly.

It is found in the cytoplasm. Its function is as follows. One of the essential components for the initiation of protein synthesis. Stabilizes the binding of IF-2 and IF-3 on the 30S subunit to which N-formylmethionyl-tRNA(fMet) subsequently binds. Helps modulate mRNA selection, yielding the 30S pre-initiation complex (PIC). Upon addition of the 50S ribosomal subunit IF-1, IF-2 and IF-3 are released leaving the mature 70S translation initiation complex. The sequence is that of Translation initiation factor IF-1 from Photobacterium profundum (strain SS9).